The primary structure comprises 87 residues: Small ribosomal subunit protein bS20 (87 aa).

Residues 1–28 (MANSAQARKRARQASAQRDHNMSQRSEL) are disordered. The span at 17–28 (QRDHNMSQRSEL) shows a compositional bias: basic and acidic residues.

This sequence belongs to the bacterial ribosomal protein bS20 family.

Binds directly to 16S ribosomal RNA. This is Small ribosomal subunit protein bS20 from Thiobacillus denitrificans (strain ATCC 25259 / T1).